Here is a 52-residue protein sequence, read N- to C-terminus: Large ribosomal subunit protein bL33 (52 aa).

Belongs to the bacterial ribosomal protein bL33 family.

The protein is Large ribosomal subunit protein bL33 (rpmG) of Chlamydia pneumoniae (Chlamydophila pneumoniae).